Here is a 432-residue protein sequence, read N- to C-terminus: Adenosylmethionine-8-amino-7-oxononanoate aminotransferase (432 aa).

Trp52 lines the substrate pocket. 112–113 is a binding site for pyridoxal 5'-phosphate; it reads GS. Residue Tyr144 participates in substrate binding. Asp245 is a binding site for pyridoxal 5'-phosphate. Residues Lys274 and Gly307 each coordinate substrate. N6-(pyridoxal phosphate)lysine is present on Lys274. 308 to 309 provides a ligand contact to pyridoxal 5'-phosphate; that stretch reads PT. Substrate is bound at residue Arg391.

The protein belongs to the class-III pyridoxal-phosphate-dependent aminotransferase family. BioA subfamily. Homodimer. The cofactor is pyridoxal 5'-phosphate.

The protein localises to the cytoplasm. It catalyses the reaction (8S)-8-amino-7-oxononanoate + S-adenosyl-L-methionine = S-adenosyl-4-methylsulfanyl-2-oxobutanoate + (7R,8S)-7,8-diammoniononanoate. It functions in the pathway cofactor biosynthesis; biotin biosynthesis; 7,8-diaminononanoate from 8-amino-7-oxononanoate (SAM route): step 1/1. In terms of biological role, catalyzes the transfer of the alpha-amino group from S-adenosyl-L-methionine (SAM) to 7-keto-8-aminopelargonic acid (KAPA) to form 7,8-diaminopelargonic acid (DAPA). It is the only aminotransferase known to utilize SAM as an amino donor. The polypeptide is Adenosylmethionine-8-amino-7-oxononanoate aminotransferase (Buchnera aphidicola subsp. Schizaphis graminum (strain Sg)).